The following is a 404-amino-acid chain: Probable tRNA sulfurtransferase (404 aa).

The THUMP domain maps to 60–165; the sequence is RSVIEALKPV…DEAAYLSHED (106 aa). ATP contacts are provided by residues 183 to 184, 208 to 209, R265, G287, and Q296; these read ML and HF.

Belongs to the ThiI family.

The protein localises to the cytoplasm. The enzyme catalyses [ThiI sulfur-carrier protein]-S-sulfanyl-L-cysteine + a uridine in tRNA + 2 reduced [2Fe-2S]-[ferredoxin] + ATP + H(+) = [ThiI sulfur-carrier protein]-L-cysteine + a 4-thiouridine in tRNA + 2 oxidized [2Fe-2S]-[ferredoxin] + AMP + diphosphate. It catalyses the reaction [ThiS sulfur-carrier protein]-C-terminal Gly-Gly-AMP + S-sulfanyl-L-cysteinyl-[cysteine desulfurase] + AH2 = [ThiS sulfur-carrier protein]-C-terminal-Gly-aminoethanethioate + L-cysteinyl-[cysteine desulfurase] + A + AMP + 2 H(+). The protein operates within cofactor biosynthesis; thiamine diphosphate biosynthesis. In terms of biological role, catalyzes the ATP-dependent transfer of a sulfur to tRNA to produce 4-thiouridine in position 8 of tRNAs, which functions as a near-UV photosensor. Also catalyzes the transfer of sulfur to the sulfur carrier protein ThiS, forming ThiS-thiocarboxylate. This is a step in the synthesis of thiazole, in the thiamine biosynthesis pathway. The sulfur is donated as persulfide by IscS. The sequence is that of Probable tRNA sulfurtransferase from Streptococcus equi subsp. zooepidemicus (strain H70).